An 888-amino-acid chain; its full sequence is Protein translocase subunit SecA (888 aa).

ATP-binding positions include Gln-81, Gly-99–Thr-103, and Asp-489.

Belongs to the SecA family.

It is found in the plastid. It localises to the chloroplast stroma. The protein localises to the chloroplast thylakoid membrane. It carries out the reaction ATP + H2O + cellular proteinSide 1 = ADP + phosphate + cellular proteinSide 2.. Its function is as follows. Has a central role in coupling the hydrolysis of ATP to the transfer of proteins across the thylakoid membrane. In Trieres chinensis (Marine centric diatom), this protein is Protein translocase subunit SecA.